We begin with the raw amino-acid sequence, 383 residues long: uncharacterized protein (383 aa).

Disordered stretches follow at residues 1–30 (MDLCQKNETDLENGENNEIQSTEETEPTCT), 114–144 (ETKPPTEGGPEKDQSSPSQTQAAPQGPSTAS), 262–289 (GEKRPSELAKHTVVNDTPSSPSPAARTS), and 341–360 (AKDPRPPVITQKAKQENSPQ). Acidic residues predominate over residues 10 to 26 (DLENGENNEIQSTEETE). Positions 128–141 (SSPSQTQAAPQGPS) are enriched in low complexity. Positions 262-271 (GEKRPSELAK) are enriched in basic and acidic residues.

This is an uncharacterized protein from Macaca fascicularis (Crab-eating macaque).